We begin with the raw amino-acid sequence, 336 residues long: Glycerol-3-phosphate dehydrogenase [NAD(P)+] (336 aa).

Residues Ser-11, Trp-12, and Lys-106 each contribute to the NADPH site. Sn-glycerol 3-phosphate-binding residues include Lys-106, Gly-134, and Ser-136. Position 138 (Ala-138) interacts with NADPH. Sn-glycerol 3-phosphate-binding residues include Lys-189, Asp-242, Ser-252, Arg-253, and Asn-254. The active-site Proton acceptor is the Lys-189. Arg-253 contributes to the NADPH binding site. Val-277 and Glu-279 together coordinate NADPH.

It belongs to the NAD-dependent glycerol-3-phosphate dehydrogenase family.

Its subcellular location is the cytoplasm. The enzyme catalyses sn-glycerol 3-phosphate + NAD(+) = dihydroxyacetone phosphate + NADH + H(+). It carries out the reaction sn-glycerol 3-phosphate + NADP(+) = dihydroxyacetone phosphate + NADPH + H(+). The protein operates within membrane lipid metabolism; glycerophospholipid metabolism. Its function is as follows. Catalyzes the reduction of the glycolytic intermediate dihydroxyacetone phosphate (DHAP) to sn-glycerol 3-phosphate (G3P), the key precursor for phospholipid synthesis. The polypeptide is Glycerol-3-phosphate dehydrogenase [NAD(P)+] (Agathobacter rectalis (strain ATCC 33656 / DSM 3377 / JCM 17463 / KCTC 5835 / VPI 0990) (Eubacterium rectale)).